A 318-amino-acid polypeptide reads, in one-letter code: Porphobilinogen deaminase (318 aa).

S-(dipyrrolylmethanemethyl)cysteine is present on Cys245.

It belongs to the HMBS family. In terms of assembly, monomer. The cofactor is dipyrromethane.

It catalyses the reaction 4 porphobilinogen + H2O = hydroxymethylbilane + 4 NH4(+). Its pathway is porphyrin-containing compound metabolism; protoporphyrin-IX biosynthesis; coproporphyrinogen-III from 5-aminolevulinate: step 2/4. It functions in the pathway porphyrin-containing compound metabolism; chlorophyll biosynthesis. Its function is as follows. Tetrapolymerization of the monopyrrole PBG into the hydroxymethylbilane pre-uroporphyrinogen in several discrete steps. The protein is Porphobilinogen deaminase of Prochlorococcus marinus (strain MIT 9215).